Reading from the N-terminus, the 114-residue chain is uncharacterized protein (114 aa).

This is an uncharacterized protein from Schizosaccharomyces pombe (strain 972 / ATCC 24843) (Fission yeast).